A 708-amino-acid chain; its full sequence is ATP-dependent DNA helicase Hel308 (708 aa).

ATP is bound by residues Gln28 and 46 to 53; that span reads TATASGKS. The region spanning 33–198 is the Helicase ATP-binding domain; that stretch reads RAGIFDGRSV…WLGARLVESS (166 aa). The DEAH box signature appears at 143-146; the sequence is DEIH. One can recognise a Helicase C-terminal domain in the interval 231–429; that stretch reads EVALAVDAVA…EPNLRAHVLG (199 aa).

This sequence belongs to the helicase family. Hel308 subfamily. As to quaternary structure, monomer.

It catalyses the reaction Couples ATP hydrolysis with the unwinding of duplex DNA by translocating in the 3'-5' direction.. It carries out the reaction ATP + H2O = ADP + phosphate + H(+). In terms of biological role, DNA-dependent ATPase and 3'-5' DNA helicase that may be involved in repair of stalled replication forks. The sequence is that of ATP-dependent DNA helicase Hel308 from Pyrobaculum calidifontis (strain DSM 21063 / JCM 11548 / VA1).